Consider the following 665-residue polypeptide: Prelamin-A/C (665 aa).

M1 carries the post-translational modification N-acetylmethionine. Positions 1-25 (METPSQRRATRSGAQASSTPLSPTR) are disordered. Residues 1–33 (METPSQRRATRSGAQASSTPLSPTRITRLQEKE) are head. The tract at residues 1–130 (METPSQRRAT…TKKEGDLLAA (130 aa)) is interaction with MLIP. T3 carries the post-translational modification Phosphothreonine. Residue S5 is modified to Phosphoserine. Residue T10 is modified to Phosphothreonine. Phosphoserine is present on residues S12 and S18. Phosphothreonine is present on T19. The residue at position 22 (S22) is a Phosphoserine. The IF rod domain occupies 31–387 (EKEDLQELND…KLLEGEEERL (357 aa)). Residue K32 is modified to N6-acetyllysine; alternate. K32 is modified (N6-succinyllysine; alternate). K32 participates in a covalent cross-link: Glycyl lysine isopeptide (Lys-Gly) (interchain with G-Cter in SUMO2); alternate. Residues 34–70 (DLQELNDRLAVYIDRVRSLETENAGLRLRITESEEVV) are coil 1A. S51, S66, and S71 each carry phosphoserine. The interval 71–80 (SREVSGIKAA) is linker 1. N6-acetyllysine occurs at positions 78 and 97. A coil 1B region spans residues 81-218 (YEAELGDARK…NIYSEELRET (138 aa)). Residue K97 forms a Glycyl lysine isopeptide (Lys-Gly) (interchain with G-Cter in SUMO2) linkage. At S107 the chain carries Phosphoserine. N6-acetyllysine occurs at positions 108, 114, 123, 135, 144, and 155. N6-acetyllysine; alternate is present on K171. Position 171 is an N6-succinyllysine; alternate (K171). Residue K171 forms a Glycyl lysine isopeptide (Lys-Gly) (interchain with G-Cter in SUMO2); alternate linkage. N6-acetyllysine is present on residues K180, K201, and K208. A Glycyl lysine isopeptide (Lys-Gly) (interchain with G-Cter in SUMO2); alternate cross-link involves residue K201. K201 is covalently cross-linked (Glycyl lysine isopeptide (Lys-Gly) (interchain with G-Cter in SUMO); alternate). K208 participates in a covalent cross-link: Glycyl lysine isopeptide (Lys-Gly) (interchain with G-Cter in SUMO2). S212 carries the phosphoserine modification. Glycyl lysine isopeptide (Lys-Gly) (interchain with G-Cter in SUMO2) cross-links involve residues K219 and K233. Residues 219 to 242 (KRRHETRLVEIDNGKQREFESRLA) form a linker 2 region. 4 positions are modified to N6-acetyllysine: K233, K260, K265, and K270. Residues 243–383 (DALQELRAQH…HAYRKLLEGE (141 aa)) are coil 2. K260 participates in a covalent cross-link: Glycyl lysine isopeptide (Lys-Gly) (interchain with G-Cter in SUMO2); alternate. A Glycyl lysine isopeptide (Lys-Gly) (interchain with G-Cter in SUMO2); alternate cross-link involves residue K270. Residues S277, S282, S301, and S307 each carry the phosphoserine modification. A Glycyl lysine isopeptide (Lys-Gly) (interchain with G-Cter in SUMO2); alternate cross-link involves residue K311. 3 positions are modified to N6-acetyllysine: K311, K316, and K341. Residues K366 and K378 each participate in a glycyl lysine isopeptide (Lys-Gly) (interchain with G-Cter in SUMO2) cross-link. Positions 384 to 442 (EERLRLSPSPTSQRSRGRASSHSSQSQGGGSVTKKRKLESSESRSSFSQHARTSGRVAV) are disordered. Positions 384–665 (EERLRLSPSP…SQSSQNCSIM (282 aa)) are tail. Phosphoserine is present on residues S390, S392, S395, S398, S403, S404, S406, S407, S409, and S414. Phosphoserine; by CDK1 is present on S392. A compositionally biased stretch (low complexity) spans 395-409 (SQRSRGRASSHSSQS). Position 416 is a phosphothreonine (T416). Residues K417 and K420 each carry the N6-acetyllysine modification. Glycyl lysine isopeptide (Lys-Gly) (interchain with G-Cter in SUMO2) cross-links involve residues K417 and K420. Residues 417–422 (KKRKLE) carry the Nuclear localization signal motif. Phosphoserine occurs at positions 423, 426, 429, and 431. Residues 428 to 545 (SSFSQHARTS…EEVAMRKLVR (118 aa)) enclose the LTD domain. Residue K450 forms a Glycyl lysine isopeptide (Lys-Gly) (interchain with G-Cter in SUMO2); alternate linkage. Residues K450 and K457 each carry the N6-acetyllysine modification. Residues S458, E460, and S463 each carry the phosphoserine modification. K486 carries the post-translational modification N6-acetyllysine. Residue K486 forms a Glycyl lysine isopeptide (Lys-Gly) (interchain with G-Cter in SUMO2) linkage. Residue T496 is modified to Phosphothreonine. At S500 the chain carries Phosphoserine. 2 positions are modified to phosphothreonine: T505 and T510. Phosphoserine is present on residues S533 and S546. T548 bears the Phosphothreonine mark. Residues 553 to 577 (NEDDDEDGEELLHHHRGSHCSGSGD) are disordered. S570, C572, and S573 each carry phosphoserine. K599 participates in a covalent cross-link: Glycyl lysine isopeptide (Lys-Gly) (interchain with G-Cter in SUMO2); alternate. A Glycyl lysine isopeptide (Lys-Gly) (interchain with G-Cter in SUMO1); alternate cross-link involves residue K599. S613, S614, S617, and S620 each carry phosphoserine. O-linked (GlcNAc) serine glycosylation is found at S626 and S629. Residues S629, S633, S637, and S653 each carry the phosphoserine modification. Positions 648 to 662 (LLGNSSPRSQSSQNC) are cleaved as a propeptide — removed in Lamin-A/C form. C662 is subject to Cysteine methyl ester. A lipid anchor (S-farnesyl cysteine) is attached at C662. Positions 663-665 (SIM) are cleaved as a propeptide — removed in Prelamin-A/C form and in Lamin-A/C form.

Belongs to the intermediate filament family. Homodimer of lamin A and lamin C. Lamin dimers then assemble into dimeric head-to-tail polymers. Ultimately, two head-to-tail polymers assemble laterally into a protofilament with a uniformly shaped rod of 3.5 nm in diameter. Interacts with lamin-associated polypeptides IA, IB and TMPO-alpha, RB1 and with emerin. Proteolytically processed isoform A interacts with NARF. Interacts with SREBF1, SREBF2, SUN1, SUN2 and TMEM43. Interacts with TMEM201. Prelamin-A/C interacts with EMD. Interacts with DMPK; may regulate nuclear envelope stability. Interacts with MLIP. Interacts with SUV39H1; the interaction increases stability of SUV39H1. Interacts with ITSN1 isoform 2. Interacts with IFFO1; the interaction forms an interior nucleoskeleton and the recruitment to DNA double-strand breaks. As to quaternary structure, interacts with EMD. In terms of assembly, interacts (via C-terminus) with LEMD2 (via N-terminus) (in vitro). Proteolytic cleavage of the C-terminal of 18 residues of prelamin-A/C results in the production of lamin-A/C. The prelamin-A/C maturation pathway includes farnesylation of CAAX motif by protein farnesyltransferase (FNTA and FNTB), removal of the last three amino acids (-AAX) by RCE1/FACE2 and/or ZMPSTE24, methylation of the C-terminal cysteine by ICMT and endoproteolytic removal of the last 15 C-terminal amino acids by ZMPSTE24. Proteolytic cleavage requires prior farnesylation and methylation, and absence of these blocks cleavage. Post-translationally, farnesylation of prelamin-A/C facilitates nuclear envelope targeting. In terms of processing, phosphorylation plays a key role in lamin organization, subcellular localization and nuclear envelope disintegration. Phosphorylation by CDK1 at Ser-22 and Ser-392 at the onset of mitosis drives lamin disassembly and nuclear envelope breakdown. Phosphorylation at Ser-22 and Ser-392 during interphase promotes localization to the nucleoplasm and regulates lamina assembly. Phosphorylation at Ser-22, Ser-392 and Ser-629 during interphase causes redistribution between the nucleus and the cytoplasm. Phosphorylation at Ser-22 by CDK1 regulates matrix stiffness. Phosphorylation status of Ser-22 determines its localization between double-strand break (DSB) sites and the nuclear matrix. Phosphorylated by ATR at Ser-282 in response to DNA damage, leading to lamin disassembly and nuclear envelope rupture. Phosphorylation also regulates stability in micronuclei arising from genome instability: phosphorylation at Ser-395 by ATR in response to genome instability and double-stranded DNA breaks primes LMNA for subsequent phosphorylation at Ser-392 by CDK1 and micronuclei envelope rupture. The rupture of micronuclear envelope triggers the cGAS-STING pathway thereby activating the type I interferon response and innate immunity. Isoform C is phosphorylated on Ser-392, Ser-407 and Ser-409 at interphase. Post-translationally, acetylation by KAT8 is required for nuclear architecture. In terms of processing, sumoylation is necessary for the localization to the nuclear envelope. The N-terminus is blocked. Expressed in liver and in bone marrow (at protein level). Expressed in cardiomyocytes. In terms of tissue distribution, specifically expressed in germ cells.

The protein resides in the nucleus lamina. Its subcellular location is the nucleus envelope. The protein localises to the nucleus. It is found in the nucleoplasm. It localises to the nucleus matrix. Its function is as follows. Lamins are intermediate filament proteins that assemble into a filamentous meshwork, and which constitute the major components of the nuclear lamina, a fibrous layer on the nucleoplasmic side of the inner nuclear membrane. Lamins provide a framework for the nuclear envelope, bridging the nuclear envelope and chromatin, thereby playing an important role in nuclear assembly, chromatin organization, nuclear membrane and telomere dynamics. Lamin A and C also regulate matrix stiffness by conferring nuclear mechanical properties. The structural integrity of the lamina is strictly controlled by the cell cycle, as seen by the disintegration and formation of the nuclear envelope in prophase and telophase, respectively. Lamin A and C are present in equal amounts in the lamina of mammals. Also invoved in DNA repair: recruited by DNA repair proteins XRCC4 and IFFO1 to the DNA double-strand breaks (DSBs) to prevent chromosome translocation by immobilizing broken DNA ends. Required for normal development of peripheral nervous system and skeletal muscle and for muscle satellite cell proliferation. Required for osteoblastogenesis and bone formation. Also prevents fat infiltration of muscle and bone marrow, helping to maintain the volume and strength of skeletal muscle and bone. Required for cardiac homeostasis. Prelamin-A/C can accelerate smooth muscle cell senescence. It acts to disrupt mitosis and induce DNA damage in vascular smooth muscle cells (VSMCs), leading to mitotic failure, genomic instability, and premature senescence. In terms of biological role, isoform C2 may have a role in determining the organization of nuclear and chromosomal structures during spermatogenesis. The chain is Prelamin-A/C (Lmna) from Mus musculus (Mouse).